The chain runs to 72 residues: UPF0352 protein Patl_3379 (72 aa).

It belongs to the UPF0352 family.

The protein is UPF0352 protein Patl_3379 of Pseudoalteromonas atlantica (strain T6c / ATCC BAA-1087).